The sequence spans 878 residues: Serine/threonine-protein kinase D2 (878 aa).

Residues 1-12 are compositionally biased toward low complexity; sequence MATAPSYPAGLP. The segment at 1 to 35 is disordered; it reads MATAPSYPAGLPGSPGPGSPPPPGGLELQSPPPLL. Residues 14 to 35 are compositionally biased toward pro residues; it reads SPGPGSPPPPGGLELQSPPPLL. At Ser30 the chain carries Phosphoserine. Position 87 is a phosphotyrosine (Tyr87). The Phorbol-ester/DAG-type 1 zinc-finger motif lies at 138–188; that stretch reads PHALTVHSYRAPAFCDHCGEMLFGLVRQGLKCDGCGLNYHKRCAFSIPNNC. Phosphoserine occurs at positions 197, 198, 200, 203, 206, 212, and 214. Residues 224–247 are disordered; the sequence is RSTTELLPRRPPSSSSSSSASSYT. The span at 236-245 shows a compositional bias: low complexity; sequence SSSSSSSASS. A Phosphoserine; by CSNK1D and CSNK1E modification is found at Ser244. Residues 264-314 form a Phorbol-ester/DAG-type 2 zinc finger; that stretch reads PHTFLIHSYTRPTVCQACKKLLKGLFRQGLQCKDCKFNCHKRCATRVPNDC. A disordered region spans residues 343 to 373; that stretch reads ESEDSGVIPGSHSENALHASEEEEGEGGKAQ. Residues 397-509 enclose the PH domain; it reads TTLREGWVVH…WETAIRQALM (113 aa). The residue at position 407 (Tyr407) is a Phosphotyrosine. Tyr438 is modified (phosphotyrosine; by ABL1). A Phosphoserine modification is found at Ser518. The region spanning 551-807 is the Protein kinase domain; it reads IFPDEVLGSG…VDKSLSHPWL (257 aa). ATP is bound by residues 557–565 and Lys580; that span reads LGSGQFGVV. The active-site Proton acceptor is the Asp674. Phosphoserine; by PKC is present on Ser706. Ser710 is modified (phosphoserine). Tyr717 carries the phosphotyrosine; by ABL1 modification. The Important for ABL1-mediated Tyr-717 phosphorylation motif lies at 724-726; sequence LNQ. Residues 844-869 are disordered; it reads HPLPGSGLPTDRDLGGACPPQDHDMQ. Ser876 carries the phosphoserine; by autocatalysis modification.

The protein belongs to the protein kinase superfamily. CAMK Ser/Thr protein kinase family. PKD subfamily. Interacts (via C-terminus) with LCK. Interacts (via N-terminal AP-rich region) with CIB1 isoform 2. Interacts (via N-terminus and zing-finger domain 1 and 2) with PRKCD in response to oxidative stress; the interaction is independent of PRKD2 tyrosine phosphorylation. It depends on Mg(2+) as a cofactor. In terms of processing, phosphorylation of Ser-876 correlates with the activation status of the kinase. Ser-706 or/and Ser-710 are probably phosphorylated by PKC. Phosphorylation at Ser-244 by CSNK1D and CSNK1E promotes nuclear localization and substrate targeting. Phosphorylation at Ser-244, Ser-706 and Ser-710 is required for nuclear localization. Phosphorylated at Tyr-438 by ABL1 in response to oxidative stress. Phosphorylated at Tyr-717 by ABL1 specifically in response to oxidative stress; requires prior phosphorylation at Ser-706 or/and Ser-710. Widely expressed.

It is found in the cytoplasm. Its subcellular location is the cell membrane. It localises to the nucleus. The protein localises to the golgi apparatus. The protein resides in the trans-Golgi network. The enzyme catalyses L-seryl-[protein] + ATP = O-phospho-L-seryl-[protein] + ADP + H(+). The catalysed reaction is L-threonyl-[protein] + ATP = O-phospho-L-threonyl-[protein] + ADP + H(+). With respect to regulation, activated by DAG and phorbol esters. Phorbol-ester/DAG-type domains bind DAG, mediating translocation to membranes. Autophosphorylation of Ser-710 and phosphorylation of Ser-706 by PKC relieves auto-inhibition by the PH domain. Catalytic activity is further increased by phosphorylation at Tyr-717 in response to oxidative stress. Functionally, serine/threonine-protein kinase that converts transient diacylglycerol (DAG) signals into prolonged physiological effects downstream of PKC, and is involved in the regulation of cell proliferation via MAPK1/3 (ERK1/2) signaling, oxidative stress-induced NF-kappa-B activation, inhibition of HDAC7 transcriptional repression, signaling downstream of T-cell antigen receptor (TCR) and cytokine production, and plays a role in Golgi membrane trafficking, angiogenesis, secretory granule release and cell adhesion. May potentiate mitogenesis induced by the neuropeptide bombesin by mediating an increase in the duration of MAPK1/3 (ERK1/2) signaling, which leads to accumulation of immediate-early gene products including FOS that stimulate cell cycle progression. In response to oxidative stress, is phosphorylated at Tyr-438 and Tyr-717 by ABL1, which leads to the activation of PRKD2 without increasing its catalytic activity, and mediates activation of NF-kappa-B. In response to the activation of the gastrin receptor CCKBR, is phosphorylated at Ser-244 by CSNK1D and CSNK1E, translocates to the nucleus, phosphorylates HDAC7, leading to nuclear export of HDAC7 and inhibition of HDAC7 transcriptional repression of NR4A1/NUR77. Upon TCR stimulation, is activated independently of ZAP70, translocates from the cytoplasm to the nucleus and is required for interleukin-2 (IL2) promoter up-regulation. During adaptive immune responses, is required in peripheral T-lymphocytes for the production of the effector cytokines IL2 and IFNG after TCR engagement and for optimal induction of antibody responses to antigens. In epithelial cells stimulated with lysophosphatidic acid (LPA), is activated through a PKC-dependent pathway and mediates LPA-stimulated interleukin-8 (IL8) secretion via a NF-kappa-B-dependent pathway. During TCR-induced T-cell activation, interacts with and is activated by the tyrosine kinase LCK, which results in the activation of the NFAT transcription factors. In the trans-Golgi network (TGN), regulates the fission of transport vesicles that are on their way to the plasma membrane and in polarized cells is involved in the transport of proteins from the TGN to the basolateral membrane. Plays an important role in endothelial cell proliferation and migration prior to angiogenesis, partly through modulation of the expression of KDR/VEGFR2 and FGFR1, two key growth factor receptors involved in angiogenesis. In secretory pathway, is required for the release of chromogranin-A (CHGA)-containing secretory granules from the TGN. Downstream of PRKCA, plays important roles in angiotensin-2-induced monocyte adhesion to endothelial cells. Plays a regulatory role in angiogenesis and tumor growth by phosphorylating a downstream mediator CIB1 isoform 2, resulting in vascular endothelial growth factor A (VEGFA) secretion. In Homo sapiens (Human), this protein is Serine/threonine-protein kinase D2 (PRKD2).